The chain runs to 530 residues: MNSYIYKEEDWEIVETLKSNVFKVNNKNNIVLNGNSFKTCILKIIINKDKNVWKEGQVLEKLKNIDSIVKCYGWCCNKHTTYIFIEYINGYTLEEYVLKNHPIPEKELSEIIEDLIKSLASIHEIGVIHRDLKLENVMFDKESNKWKLIDFGLSFSFSPSNDGSKCYTQCGSIGYIPPEIKLGGQCGRKSDIWIFGCLVIKMLGGELEETEIQIDGASFNNNNNKPNIWIPKIPPHASKFLQNFIQKCFFEEEVLRFDSITLIDHPFLSLFKSKGNMLYLIQRGHKRWMDITQKKKGIKIEGKTFTFEDNDNKEPFGPGIVPDGTVELIFKKTFNQRLIPGSIPSTVQILDFGVDGDSFFNQEMDDDLFLDCDLKSLTLGNAFTHTLPYFGSLCYLSLGRNRNALQNLPPTLETLKYYGEVQTDLNIKSIPHVKNLLIPFNNHSIIIDTIPPTVKYLAWGKLKDLEAIETLKNLPPSVNDLTFSCPPDVFDKIQRKHIPDSISIIIINQHVIELKNSDNSETYLKDNIVC.

Positions 11 to 268 (WEIVETLKSN…SITLIDHPFL (258 aa)) constitute a Protein kinase domain. ATP is bound by residues 17 to 25 (LKSNVFKVN) and lysine 43. The Proton acceptor role is filled by aspartate 131.

Belongs to the protein kinase superfamily. STE Ser/Thr protein kinase family. It depends on Mg(2+) as a cofactor.

It carries out the reaction L-seryl-[protein] + ATP = O-phospho-L-seryl-[protein] + ADP + H(+). The catalysed reaction is L-threonyl-[protein] + ATP = O-phospho-L-threonyl-[protein] + ADP + H(+). The polypeptide is Probable serine/threonine-protein kinase fnkB (Dictyostelium discoideum (Social amoeba)).